Reading from the N-terminus, the 247-residue chain is tRNA uridine(34) hydroxylase (247 aa).

A Rhodanese domain is found at 124 to 218; the sequence is TKQDVIVIDT…YLEDTQNKNN (95 aa). The active-site Cysteine persulfide intermediate is the C178.

The protein belongs to the TrhO family.

The enzyme catalyses uridine(34) in tRNA + AH2 + O2 = 5-hydroxyuridine(34) in tRNA + A + H2O. In terms of biological role, catalyzes oxygen-dependent 5-hydroxyuridine (ho5U) modification at position 34 in tRNAs. In Rickettsia rickettsii (strain Iowa), this protein is tRNA uridine(34) hydroxylase.